Here is a 555-residue protein sequence, read N- to C-terminus: MGIEDNSQQPNTGSPYGQSPPSQYNPYGQQPPQQQQYNPYGEQQQQPQQQQQYGYQPQFQPTYQQPPPQPQYYSQAQMPFPPQQQQPPPITNLNKANDRESLIGGVGGGGIPPNNNQTMVGSYNEGETKFAPPKYQDIWFSILFGLNFGLLIVVSASAFAKTPYTYYDSNYYDNTSGGSFGFLFAILPFTIVFSLLYIWAWLKLAANHAESLIKYSFFGAMGLMIGYCVFFFVWGAIYLGIIFAIMAFFIILFYISCRSRIPFTATLLSNAVAIIKEYPSVIRAGYVSIFINFVWFIVWGSAFARVNMVYTGAIQTCINIYLVFTLYWVFHVIKNTLHTTVSGLLATWYFCSGPNGVGMPHNPTLGSARRALTTSFGSICFGSLIISLIETLRYLSQMMINNRNVVVKIIGYIFNCILSMLSSIVQFFNTYAFTHVAIYGKSFCDSAKSTFTMFENRLGSTIINDNFVGTTIAIGGLVASLLLSILGALISIPFDMSVYGGALALFIGYLVIITNLEVVYSSTISLFVCYVMEPEVLAHTKPQLYQLYSSTYHLR.

Over residues 1-17 (MGIEDNSQQPNTGSPYG) the composition is skewed to polar residues. The interval 1 to 101 (MGIEDNSQQP…NLNKANDRES (101 aa)) is disordered. Over residues 19-63 (SPPSQYNPYGQQPPQQQQYNPYGEQQQQPQQQQQYGYQPQFQPTY) the composition is skewed to low complexity. Residues 79–90 (PFPPQQQQPPPI) show a composition bias toward pro residues. N-linked (GlcNAc...) asparagine glycosylation is present at Asn-116. Residues 138–158 (IWFSILFGLNFGLLIVVSASA) form a helical membrane-spanning segment. Asn-174 is a glycosylation site (N-linked (GlcNAc...) asparagine). 10 helical membrane passes run 182–202 (FLFA…WAWL), 210–230 (ESLI…YCVF), 231–251 (FFVW…FFII), 284–304 (AGYV…SAFA), 313–333 (AIQT…FHVI), 340–360 (TVSG…VGMP), 372–392 (LTTS…IETL), 405–425 (VVVK…SSIV), 472–492 (IAIG…LISI), and 493–513 (PFDM…LVII).

It belongs to the CTL (choline transporter-like) family.

It is found in the membrane. This Dictyostelium discoideum (Social amoeba) protein is CTL-like protein DDB_G0274487.